The primary structure comprises 293 residues: MKKKLILGLVMMMALFSLAACGGGGDVVKTDSGDVTKDELYDAMKDKYGSEFVQQLTFEKILGDKYKVSDEDVDKKFNEYKSQYGDQFSAVLTQSGLTEKSFKSQLKYNLLVQKATEANTDTSDKTLKKYYETWQPDITVSHILVADENKAKEVEQKLKDGEKFADLAKEYSTDTATKDNGGQLAPFGPGKMDPAFEKAAYALKNKGDISAPVKTQYGYHIIQMDKPATKTTFEKDKKAVKASYLESQLTTENMQKTLKKEYKDANVKVEDKDLKDAFKDFDGSSSSDSDSSK.

The N-terminal stretch at 1-20 is a signal peptide; the sequence is MKKKLILGLVMMMALFSLAA. Residue C21 is the site of N-palmitoyl cysteine attachment. C21 carries S-diacylglycerol cysteine lipidation. The region spanning 135-226 is the PpiC domain; sequence QPDITVSHIL…YGYHIIQMDK (92 aa).

Belongs to the PrsA family.

Its subcellular location is the cell membrane. It catalyses the reaction [protein]-peptidylproline (omega=180) = [protein]-peptidylproline (omega=0). Plays a major role in protein secretion by helping the post-translocational extracellular folding of several secreted proteins. The polypeptide is Foldase protein PrsA 2 (prsA2) (Listeria monocytogenes serovar 1/2a (strain ATCC BAA-679 / EGD-e)).